We begin with the raw amino-acid sequence, 358 residues long: Insulin gene enhancer protein isl-2b (358 aa).

LIM zinc-binding domains are found at residues 27–80 (CVGC…CKRD) and 89–143 (CAKC…RADH). The homeobox DNA-binding region spans 191–250 (TTRVRTVLNEKQLHTLRTCYNANPRPDALMKEQLVEMTGLSPRVIRVWFQNKRCKDKKRS). Residues 325 to 335 (ESGSLGNSSGS) show a composition bias toward low complexity. Residues 325-358 (ESGSLGNSSGSDVTSLSSQLPDTPNSMVPSPVET) form a disordered region. A compositionally biased stretch (polar residues) spans 336-358 (DVTSLSSQLPDTPNSMVPSPVET).

Its subcellular location is the nucleus. Its function is as follows. Binds to one of the cis-acting domain of the insulin gene enhancer. May be involved in the regional specification of the myotome and also in target recognition by the caudal primary neuron. The protein is Insulin gene enhancer protein isl-2b (isl2b) of Danio rerio (Zebrafish).